A 344-amino-acid chain; its full sequence is Type IV pilus retractation ATPase PilT (344 aa).

Residues Arg-82 and 133–138 (GSGKST) contribute to the ATP site.

The protein belongs to the GSP E family. As to quaternary structure, homohexamer. Interacts with PilU.

The protein localises to the cytoplasm. Its function is as follows. ATPase component of the type IV pilus (T4P) that plays a role in surface and host cell adhesion, colonization, biofilm maturation, virulence, and twitching, a form of surface-associated motility facilitated by cycles of extension, adhesion, and retraction of T4P fibers. Acts as a molecular motor to provide the energy that is required for T4P retraction while antagonist PilB ATPase activity is required for T4P extension. Also promotes PilU retractation activity through direct interaction. This Pseudomonas aeruginosa (strain ATCC 15692 / DSM 22644 / CIP 104116 / JCM 14847 / LMG 12228 / 1C / PRS 101 / PAO1) protein is Type IV pilus retractation ATPase PilT (pilT).